Consider the following 298-residue polypeptide: Zinc transport system membrane protein TroC (298 aa).

A run of 8 helical transmembrane segments spans residues 16–36 (VVLG…FAVL), 41–61 (LFGD…FLLT), 68–88 (ILLL…LMVM), 97–117 (GAQG…LTHV), 144–164 (VLLI…FWKE), 187–207 (FMLT…VGVI), 229–249 (VLCA…SVVS), and 255–275 (LSTG…SIML).

This sequence belongs to the ABC-3 integral membrane protein family.

It localises to the cell membrane. In terms of biological role, part of an ATP-driven transport system TroABCD for zinc. The chain is Zinc transport system membrane protein TroC (troC) from Treponema pallidum (strain Nichols).